We begin with the raw amino-acid sequence, 793 residues long: Serine/threonine-protein phosphatase BSU1 (793 aa).

Kelch repeat units lie at residues 53 to 109, 110 to 160, 214 to 262, 264 to 314, and 329 to 388; these read STTA…LYGT, LILI…IAAQ, IFLL…VFGG, KLHV…NQYQ, and HLYV…EASS. A phosphoserine mark is found at serine 395 and serine 444. Mn(2+) is bound by residues aspartate 510, histidine 512, aspartate 544, and asparagine 576. Histidine 577 functions as the Proton donor in the catalytic mechanism. Residues histidine 629 and histidine 707 each coordinate Mn(2+). Residue serine 764 is modified to Phosphoserine.

This sequence belongs to the PPP phosphatase family. BSU subfamily. As to quaternary structure, interacts with CDG1, CDL1 and ASK7/BIN2. Requires Mn(2+) as cofactor. Phosphorylated at Ser-395 and Ser-444. Phosphorylated at Ser-764 by CDG1 and CDL1. In terms of tissue distribution, mainly expressed in young, elongating tissues. In young seedlings, it is expressed at the base of the hypocotyl, at the tip and most peripheral cell layers of cotyledons, and in the vascular cylinder of roots, particularly in the elongation zone and at the point of emergence of lateral roots. In mature plants, it is still present in the root vasculature, but almost completely absent in fully expanded stems and leaves. In flowers, it is mainly expressed in sepal veins, anther filaments, and in the style, suggesting that BSU1 is expressed in actively growing regions and apparently enriched in vascular tissues.

It is found in the nucleus. It catalyses the reaction O-phospho-L-seryl-[protein] + H2O = L-seryl-[protein] + phosphate. The catalysed reaction is O-phospho-L-threonyl-[protein] + H2O = L-threonyl-[protein] + phosphate. Its activity is regulated as follows. Activated by phosphorylation at Ser-764 by CDG1. Phosphatase that acts as a positive regulator of brassinosteroid (BR) signaling. Dephosphorylates BES1, a transcription factor that regulates the expression of BR-response genes, thereby playing an important role in the regulation of response to BRs. Inactivates the negative regulator of BR signaling ASK7/BIN2 by dephosphorylation at 'Tyr-200'. This is Serine/threonine-protein phosphatase BSU1 (BSU1) from Arabidopsis thaliana (Mouse-ear cress).